A 41-amino-acid chain; its full sequence is Competence-stimulating peptide type 2 (41 aa).

The propeptide occupies 1 to 24 (MKNTVKLEQFVALKEKDLQKIKGG).

It belongs to the ComC family.

The protein localises to the secreted. In terms of biological role, acts as a pheromone, induces cells to develop competence for genetic transformation. The protein is Competence-stimulating peptide type 2 (comC2) of Streptococcus pneumoniae serotype 4 (strain ATCC BAA-334 / TIGR4).